A 205-amino-acid chain; its full sequence is Quinone-oxidoreductase QR2 (205 aa).

One can recognise a Flavodoxin-like domain in the interval 5–192; that stretch reads VYIVYYSTYG…LKQAFHQGMY (188 aa). Residues 11-15, 112-165, and H136 each bind FMN; these read STYGH and IFFS…SPYG. Y13 is a binding site for NAD(+).

The protein belongs to the WrbA family. FMN serves as cofactor.

It catalyses the reaction a quinone + NADH + H(+) = a quinol + NAD(+). It carries out the reaction a quinone + NADPH + H(+) = a quinol + NADP(+). With respect to regulation, inhibited by dicumarol. Its function is as follows. NAD(P)H:quinone oxidoreductase reducing quinones by a two-electron transfer mechanism. Can use either NADPH or NADH as electron donor. Can use menadione, 5-hydroxy-1,4-naphthoquinone (juglone) and 2,6-dimethoxy-p-benzoquinone (DMBQ) as substrates. Mitigates the toxicity of exogenous quinones in the rhizosphere. This Triphysaria versicolor (Yellow owl's clover) protein is Quinone-oxidoreductase QR2.